We begin with the raw amino-acid sequence, 250 residues long: N-acyl homoserine lactonase (250 aa).

Zn(2+)-binding residues include His-104, His-106, Asp-108, His-109, His-169, Asp-191, and His-235.

Belongs to the metallo-beta-lactamase superfamily. As to quaternary structure, monomer. Zn(2+) is required as a cofactor.

It catalyses the reaction an N-acyl-L-homoserine lactone + H2O = an N-acyl-L-homoserine + H(+). Its activity is regulated as follows. Completely inhibited by Cu(2+) and Ag(+). Partially inhibited by Cr(2+), Pb(2+) and Fe(2+). Mg(2+), Ca(2+), Mn(2+), Co(2+), Ni(2+), Zn(2+) and Cd(2+) have no effect on activity. The chelating agents EDTA, 2,2'bipyridine and o-phenanthroline have no effect on enzyme activity. Its function is as follows. Hydrolyzes acyl homoserine lactones with varying lengths of acyl chains, with a slight preference for substrates without 3-oxo substitution at the C3 position. Has only residual activity towards non-acyl lactones, and no activity towards non-cyclic esters. The protein is N-acyl homoserine lactonase of Bacillus sp.